Here is a 124-residue protein sequence, read N- to C-terminus: Small ribosomal subunit protein uS13 (124 aa).

The disordered stretch occupies residues 99 to 124; the sequence is PCRGQKTKTNARTCKGPKKTVANKKK. The span at 113–124 shows a compositional bias: basic residues; that stretch reads KGPKKTVANKKK.

This sequence belongs to the universal ribosomal protein uS13 family. Part of the 30S ribosomal subunit. Forms a loose heterodimer with protein S19. Forms two bridges to the 50S subunit in the 70S ribosome.

In terms of biological role, located at the top of the head of the 30S subunit, it contacts several helices of the 16S rRNA. In the 70S ribosome it contacts the 23S rRNA (bridge B1a) and protein L5 of the 50S subunit (bridge B1b), connecting the 2 subunits; these bridges are implicated in subunit movement. Contacts the tRNAs in the A and P-sites. This Lachnospira eligens (strain ATCC 27750 / DSM 3376 / VPI C15-48 / C15-B4) (Eubacterium eligens) protein is Small ribosomal subunit protein uS13.